The chain runs to 102 residues: Integration host factor subunit beta (102 aa).

Residues 54 to 102 (HHRPARMGRNPKTGEPVALPAKYVPHFKPGKELRERVNSSRHQAPLRSQ) form a disordered region. Residues 82 to 91 (PGKELRERVN) show a composition bias toward basic and acidic residues. The span at 93–102 (SRHQAPLRSQ) shows a compositional bias: polar residues.

This sequence belongs to the bacterial histone-like protein family. Heterodimer of an alpha and a beta chain.

Functionally, this protein is one of the two subunits of integration host factor, a specific DNA-binding protein that functions in genetic recombination as well as in transcriptional and translational control. This chain is Integration host factor subunit beta, found in Halorhodospira halophila (strain DSM 244 / SL1) (Ectothiorhodospira halophila (strain DSM 244 / SL1)).